Reading from the N-terminus, the 350-residue chain is FAD:protein FMN transferase (350 aa).

A signal peptide spans 1–19 (MDMTFFRAALLGACVLLSG). C20 is lipidated: N-palmitoyl cysteine. C20 is lipidated: S-diacylglycerol cysteine. FAD is bound by residues M41, W78, 119 to 121 (AMD), and D181. T184 is a Mg(2+) binding site. Residues E187 and I272 each coordinate FAD. D298, D301, and T302 together coordinate Mg(2+).

Belongs to the ApbE family. Mg(2+) serves as cofactor.

It is found in the cell inner membrane. The catalysed reaction is L-threonyl-[protein] + FAD = FMN-L-threonyl-[protein] + AMP + H(+). In terms of biological role, flavin transferase that catalyzes the transfer of the FMN moiety of FAD and its covalent binding to the hydroxyl group of a threonine residue in a target flavoprotein such as NqrB and NqrC, two subunits of the NQR complex. In Klebsiella pneumoniae (strain 342), this protein is FAD:protein FMN transferase.